Reading from the N-terminus, the 357-residue chain is 3-isopropylmalate dehydrogenase (357 aa).

Residues Arg97, Arg107, Arg135, and Asp224 each coordinate substrate. Mg(2+) is bound by residues Asp224, Asp248, and Asp252. 282–294 (GSAPDIAGQDLAN) is an NAD(+) binding site.

The protein belongs to the isocitrate and isopropylmalate dehydrogenases family. LeuB type 1 subfamily. As to quaternary structure, homodimer. Mg(2+) serves as cofactor. Requires Mn(2+) as cofactor.

The protein localises to the cytoplasm. The catalysed reaction is (2R,3S)-3-isopropylmalate + NAD(+) = 4-methyl-2-oxopentanoate + CO2 + NADH. It participates in amino-acid biosynthesis; L-leucine biosynthesis; L-leucine from 3-methyl-2-oxobutanoate: step 3/4. Its function is as follows. Catalyzes the oxidation of 3-carboxy-2-hydroxy-4-methylpentanoate (3-isopropylmalate) to 3-carboxy-4-methyl-2-oxopentanoate. The product decarboxylates to 4-methyl-2 oxopentanoate. This Prochlorococcus marinus (strain MIT 9313) protein is 3-isopropylmalate dehydrogenase.